Reading from the N-terminus, the 125-residue chain is MAAKKSSTPNRGFKVADQIQRDLTELIRELKDPRIGMVTLQAVEVTPDYAHAKVFFSVLVGDADATQDALNQAAGFLRNGLFKRLHIHTVPTLHFMFDRTTERASDMNALIARAVASRSKDDDEA.

Belongs to the RbfA family. In terms of assembly, monomer. Binds 30S ribosomal subunits, but not 50S ribosomal subunits or 70S ribosomes.

It is found in the cytoplasm. Its function is as follows. One of several proteins that assist in the late maturation steps of the functional core of the 30S ribosomal subunit. Associates with free 30S ribosomal subunits (but not with 30S subunits that are part of 70S ribosomes or polysomes). Required for efficient processing of 16S rRNA. May interact with the 5'-terminal helix region of 16S rRNA. This is Ribosome-binding factor A from Paracidovorax citrulli (strain AAC00-1) (Acidovorax citrulli).